The chain runs to 367 residues: Leucine dehydrogenase (367 aa).

The active site involves lysine 80. Residue 180–186 (GVGNVAY) participates in NAD(+) binding.

This sequence belongs to the Glu/Leu/Phe/Val dehydrogenases family. As to quaternary structure, homohexamer.

It catalyses the reaction L-leucine + NAD(+) + H2O = 4-methyl-2-oxopentanoate + NH4(+) + NADH + H(+). Its pathway is amino-acid degradation; L-leucine degradation; 4-methyl-2-oxopentanoate from L-leucine (dehydrogenase route): step 1/1. Functionally, catalyzes the reversible deamination of L-leucine to 4-methyl-2-oxopentanoate. In Geobacillus stearothermophilus (Bacillus stearothermophilus), this protein is Leucine dehydrogenase (ldh).